We begin with the raw amino-acid sequence, 132 residues long: NADH-quinone oxidoreductase subunit A (132 aa).

Transmembrane regions (helical) follow at residues 7–27, 62–82, and 91–111; these read YWVLLVYTFVVIALVAGMIGV, FYLIAMFFVIFDLEAAYLYAW, and WTGYLVIAVFILALLAALAYL.

It belongs to the complex I subunit 3 family. As to quaternary structure, NDH-1 is composed of 14 different subunits. Subunits NuoA, H, J, K, L, M, N constitute the membrane sector of the complex.

Its subcellular location is the cell inner membrane. The catalysed reaction is a quinone + NADH + 5 H(+)(in) = a quinol + NAD(+) + 4 H(+)(out). Its function is as follows. NDH-1 shuttles electrons from NADH, via FMN and iron-sulfur (Fe-S) centers, to quinones in the respiratory chain. The immediate electron acceptor for the enzyme in this species is believed to be ubiquinone. Couples the redox reaction to proton translocation (for every two electrons transferred, four hydrogen ions are translocated across the cytoplasmic membrane), and thus conserves the redox energy in a proton gradient. The chain is NADH-quinone oxidoreductase subunit A from Acidiphilium cryptum (strain JF-5).